The chain runs to 265 residues: Tryptophan synthase alpha chain (265 aa).

Active-site proton acceptor residues include glutamate 49 and aspartate 60.

The protein belongs to the TrpA family. In terms of assembly, tetramer of two alpha and two beta chains.

The catalysed reaction is (1S,2R)-1-C-(indol-3-yl)glycerol 3-phosphate + L-serine = D-glyceraldehyde 3-phosphate + L-tryptophan + H2O. It participates in amino-acid biosynthesis; L-tryptophan biosynthesis; L-tryptophan from chorismate: step 5/5. The alpha subunit is responsible for the aldol cleavage of indoleglycerol phosphate to indole and glyceraldehyde 3-phosphate. This Cupriavidus taiwanensis (strain DSM 17343 / BCRC 17206 / CCUG 44338 / CIP 107171 / LMG 19424 / R1) (Ralstonia taiwanensis (strain LMG 19424)) protein is Tryptophan synthase alpha chain.